A 223-amino-acid polypeptide reads, in one-letter code: MAEVKLLGFWYSPFTHRVEWALKLKGVKYEYIEEDRDNKSSLLLQSNPVHKKVPVLIHNGKPIVESMVILEYIDETFEGPSILPKDPYDRALARFWSKFLGDKVAAVVNTFFRKGEEQEKGKEEVYEMLKVLDNELKDKKFFVGDKFGFADIAANLVGFWLGVFEEGYGVVLVTSEKFPNFSRWRDEYINCSQVKESLPSRDELLAFFRARFQAVVASISAPK.

The region spanning 2-81 is the GST N-terminal domain; that stretch reads AEVKLLGFWY…YIDETFEGPS (80 aa). Residues Ser-12, Lys-39, Val-53, and 65 to 66 contribute to the glutathione site; that span reads ES. The 127-residue stretch at 86–212 folds into the GST C-terminal domain; the sequence is DPYDRALARF…ELLAFFRARF (127 aa).

The protein belongs to the GST superfamily. HSP26 family. As to expression, root tip-specific expression.

The catalysed reaction is RX + glutathione = an S-substituted glutathione + a halide anion + H(+). This is Probable glutathione S-transferase from Nicotiana tabacum (Common tobacco).